Reading from the N-terminus, the 89-residue chain is uncharacterized protein (89 aa).

An N-terminal signal peptide occupies residues 1–27 (MKKAAAVLLSLGLVFGFSYGAGHVAEA).

This is an uncharacterized protein from Bacillus subtilis (strain 168).